We begin with the raw amino-acid sequence, 286 residues long: Formyltetrahydrofolate deformylase (286 aa).

One can recognise an ACT domain in the interval Val8–Gln88. The active site involves Asp230.

Belongs to the PurU family.

The enzyme catalyses (6R)-10-formyltetrahydrofolate + H2O = (6S)-5,6,7,8-tetrahydrofolate + formate + H(+). Its pathway is purine metabolism; IMP biosynthesis via de novo pathway; formate from 10-formyl-5,6,7,8-tetrahydrofolate: step 1/1. Functionally, catalyzes the hydrolysis of 10-formyltetrahydrofolate (formyl-FH4) to formate and tetrahydrofolate (FH4). The protein is Formyltetrahydrofolate deformylase of Corynebacterium sp. (strain P-1).